We begin with the raw amino-acid sequence, 343 residues long: Holliday junction branch migration complex subunit RuvB (343 aa).

The tract at residues 4–184 (SDRLISAKAG…FGIVQRLEFY (181 aa)) is large ATPase domain (RuvB-L). ATP contacts are provided by residues Ile-23, Arg-24, Gly-65, Lys-68, Thr-69, Thr-70, 131–133 (EDY), Arg-174, Tyr-184, and Arg-221. Position 69 (Thr-69) interacts with Mg(2+). Residues 185–255 (NHQDLTHIIT…IADQALNMLK (71 aa)) are small ATPAse domain (RuvB-S). The tract at residues 258 to 343 (SQGFDHMDRR…RSGREDDLFE (86 aa)) is head domain (RuvB-H). Arg-294, Arg-313, and Arg-318 together coordinate DNA.

The protein belongs to the RuvB family. As to quaternary structure, homohexamer. Forms an RuvA(8)-RuvB(12)-Holliday junction (HJ) complex. HJ DNA is sandwiched between 2 RuvA tetramers; dsDNA enters through RuvA and exits via RuvB. An RuvB hexamer assembles on each DNA strand where it exits the tetramer. Each RuvB hexamer is contacted by two RuvA subunits (via domain III) on 2 adjacent RuvB subunits; this complex drives branch migration. In the full resolvosome a probable DNA-RuvA(4)-RuvB(12)-RuvC(2) complex forms which resolves the HJ.

Its subcellular location is the cytoplasm. It carries out the reaction ATP + H2O = ADP + phosphate + H(+). Its function is as follows. The RuvA-RuvB-RuvC complex processes Holliday junction (HJ) DNA during genetic recombination and DNA repair, while the RuvA-RuvB complex plays an important role in the rescue of blocked DNA replication forks via replication fork reversal (RFR). RuvA specifically binds to HJ cruciform DNA, conferring on it an open structure. The RuvB hexamer acts as an ATP-dependent pump, pulling dsDNA into and through the RuvAB complex. RuvB forms 2 homohexamers on either side of HJ DNA bound by 1 or 2 RuvA tetramers; 4 subunits per hexamer contact DNA at a time. Coordinated motions by a converter formed by DNA-disengaged RuvB subunits stimulates ATP hydrolysis and nucleotide exchange. Immobilization of the converter enables RuvB to convert the ATP-contained energy into a lever motion, pulling 2 nucleotides of DNA out of the RuvA tetramer per ATP hydrolyzed, thus driving DNA branch migration. The RuvB motors rotate together with the DNA substrate, which together with the progressing nucleotide cycle form the mechanistic basis for DNA recombination by continuous HJ branch migration. Branch migration allows RuvC to scan DNA until it finds its consensus sequence, where it cleaves and resolves cruciform DNA. In Marinobacter nauticus (strain ATCC 700491 / DSM 11845 / VT8) (Marinobacter aquaeolei), this protein is Holliday junction branch migration complex subunit RuvB.